A 496-amino-acid polypeptide reads, in one-letter code: Fibronectin type III and SPRY domain-containing protein 1 (496 aa).

The stretch at 4–99 (QKEALRKIIT…ALESSEELLE (96 aa)) forms a coiled coil. Residues 105–162 (LLATDSKDFPQAAKQIKDGVTMAPAFRLSLKAKVSDNMSHLMVDFAQERRMLQALTFL) form the COS domain. Positions 164-268 (VPSAPVIDLT…EPVTLETPAF (105 aa)) constitute a Fibronectin type-III domain. The 210-residue stretch at 268 to 477 (FMFRLDASTS…VTTGLQVPSS (210 aa)) folds into the B30.2/SPRY domain. The disordered stretch occupies residues 301 to 336 (KAREKDGKGRTASPVNSPARGTPSPKRMPSGRGGRD). An omega-N-methylarginine mark is found at R310 and R320.

As to quaternary structure, oligomerization is required for binding to microtubules.

It is found in the cytoplasm. It localises to the cytoskeleton. The protein localises to the microtubule organizing center. Its subcellular location is the centrosome. The protein resides in the nucleus. It is found in the cleavage furrow. Its function is as follows. May be involved in microtubule organization and stabilization. This is Fibronectin type III and SPRY domain-containing protein 1 (FSD1) from Bos taurus (Bovine).